We begin with the raw amino-acid sequence, 307 residues long: Homoserine O-acetyltransferase (307 aa).

Cysteine 142 acts as the Acyl-thioester intermediate in catalysis. 2 residues coordinate substrate: lysine 163 and serine 192. Histidine 235 acts as the Proton acceptor in catalysis. Glutamate 237 is an active-site residue. Arginine 249 is a binding site for substrate.

It belongs to the MetA family.

It localises to the cytoplasm. It carries out the reaction L-homoserine + acetyl-CoA = O-acetyl-L-homoserine + CoA. The protein operates within amino-acid biosynthesis; L-methionine biosynthesis via de novo pathway; O-acetyl-L-homoserine from L-homoserine: step 1/1. Transfers an acetyl group from acetyl-CoA to L-homoserine, forming acetyl-L-homoserine. This Rhizobium johnstonii (strain DSM 114642 / LMG 32736 / 3841) (Rhizobium leguminosarum bv. viciae) protein is Homoserine O-acetyltransferase.